Reading from the N-terminus, the 239-residue chain is LexA repressor (239 aa).

Residues 1–40 (MTEAATGPEGADPSRAARSLPGRPPGIRADSSGLTDRQRR) form a disordered region. The H-T-H motif DNA-binding region spans 58-78 (MREIGQAVGLSSTSSVAHQLM). The span at 89–100 (DPHRPRAYEVRG) shows a compositional bias: basic and acidic residues. The disordered stretch occupies residues 89-116 (DPHRPRAYEVRGSDQPSAQPADTSGKPA). Catalysis depends on for autocatalytic cleavage activity residues S163 and K200.

This sequence belongs to the peptidase S24 family. As to quaternary structure, homodimer.

The catalysed reaction is Hydrolysis of Ala-|-Gly bond in repressor LexA.. In terms of biological role, represses a number of genes involved in the response to DNA damage (SOS response), including recA and lexA. In the presence of single-stranded DNA, RecA interacts with LexA causing an autocatalytic cleavage which disrupts the DNA-binding part of LexA, leading to derepression of the SOS regulon and eventually DNA repair. The polypeptide is LexA repressor (Streptomyces clavuligerus).